Reading from the N-terminus, the 322-residue chain is Transcription factor WRKY45-2 (322 aa).

Residues 67-110 form a disordered region; the sequence is GGEGSEVQSEVTCGGGASAGGKRKAPAANRKANCRRRTQQSSGN. The segment at residues 112–180 is a DNA-binding region (WRKY); sequence VVVKNLDDGQ…YIGEHTCRDP (69 aa). The disordered stretch occupies residues 256 to 284; that stretch reads SDQEEVLSSLTPGSSAARGGGVAGPFGPD.

Belongs to the WRKY group III family. As to expression, expressed in aleurone cells.

The protein resides in the nucleus. In terms of biological role, transcriptional activator involved in defense responses against pathogens. Acts as a positive regulator of defense responses against the rice blast fungus Magnaporthe oryzae. Acts as a positive regulator of defense responses against the bacterial blight Xanthomonas oryzae pv oryzae (Xoo) and the bacterial streak Xanthomonas oryzae pv oryzicola (Xoc). Acts as a positive regulator of abscisic acid (ABA) signaling that suppresses growth of seedlings. Acts as a negative regulator of salt stress response. Acts as a negative regulator of cold stress response. Acts as a negative regulator of drought stress response. The protein is Transcription factor WRKY45-2 of Oryza sativa subsp. indica (Rice).